A 143-amino-acid chain; its full sequence is MFMGEYSHTLDTKSRLIIPAKFRNQLGDQFIITKWMEKSLRAMPMAVWEKLQEQLNQLPLGKKDARAFRRFVMAGALEAEFDKQGRIVVPNNLREYASLEKSVVVTGVGDSFEIWSAENWSAYTAETADDFDNIAEGLVDFDL.

2 SpoVT-AbrB domains span residues 5–47 and 76–119; these read EYSH…PMAV and ALEA…SAEN.

The protein belongs to the MraZ family. As to quaternary structure, forms oligomers.

The protein localises to the cytoplasm. It is found in the nucleoid. The protein is Transcriptional regulator MraZ of Leuconostoc mesenteroides subsp. mesenteroides (strain ATCC 8293 / DSM 20343 / BCRC 11652 / CCM 1803 / JCM 6124 / NCDO 523 / NBRC 100496 / NCIMB 8023 / NCTC 12954 / NRRL B-1118 / 37Y).